A 1230-amino-acid chain; its full sequence is ATP-dependent helicase/nuclease subunit A (1230 aa).

Positions 3–473 (TKFTKNQQRA…IDLADNFRSQ (471 aa)) constitute a UvrD-like helicase ATP-binding domain. 24–31 (ASAGSGKT) contributes to the ATP binding site. The 283-residue stretch at 500 to 782 (EAKLVPKAAY…RIMTIHASKG (283 aa)) folds into the UvrD-like helicase C-terminal domain.

It belongs to the helicase family. AddA subfamily. In terms of assembly, heterodimer of AddA and AddB/RexB. Mg(2+) serves as cofactor.

The enzyme catalyses Couples ATP hydrolysis with the unwinding of duplex DNA by translocating in the 3'-5' direction.. It carries out the reaction ATP + H2O = ADP + phosphate + H(+). Its function is as follows. The heterodimer acts as both an ATP-dependent DNA helicase and an ATP-dependent, dual-direction single-stranded exonuclease. Recognizes the chi site generating a DNA molecule suitable for the initiation of homologous recombination. The AddA nuclease domain is required for chi fragment generation; this subunit has the helicase and 3' -&gt; 5' nuclease activities. In Leuconostoc mesenteroides subsp. mesenteroides (strain ATCC 8293 / DSM 20343 / BCRC 11652 / CCM 1803 / JCM 6124 / NCDO 523 / NBRC 100496 / NCIMB 8023 / NCTC 12954 / NRRL B-1118 / 37Y), this protein is ATP-dependent helicase/nuclease subunit A.